Consider the following 97-residue polypeptide: NADH-quinone oxidoreductase subunit K (97 aa).

The next 3 membrane-spanning stretches (helical) occupy residues 1–21, 25–45, and 57–77; these read MSEY…GVLY, ILVM…LMVY, and VFVF…LAIL.

This sequence belongs to the complex I subunit 4L family. As to quaternary structure, NDH-1 is composed of 14 different subunits. Subunits NuoA, H, J, K, L, M, N constitute the membrane sector of the complex.

The protein localises to the cell inner membrane. The enzyme catalyses a quinone + NADH + 5 H(+)(in) = a quinol + NAD(+) + 4 H(+)(out). In terms of biological role, NDH-1 shuttles electrons from NADH, via FMN and iron-sulfur (Fe-S) centers, to quinones in the respiratory chain. The immediate electron acceptor for the enzyme in this species is believed to be a menaquinone. Couples the redox reaction to proton translocation (for every two electrons transferred, four hydrogen ions are translocated across the cytoplasmic membrane), and thus conserves the redox energy in a proton gradient. In Cytophaga hutchinsonii (strain ATCC 33406 / DSM 1761 / CIP 103989 / NBRC 15051 / NCIMB 9469 / D465), this protein is NADH-quinone oxidoreductase subunit K.